The chain runs to 162 residues: MRLTSKGRYAVTAMLDVALNSEAGPVPLADISERQGISLSYLEQLFSRLRKNGLVSSVRGPGGGYLLGKDASSIAVGEVISAVDESVDATRCQGKGGCQGGDKCLTHALWRDLSDRLTGFLNNITLGELVNNQEVLDVSGRQHTHDAPRTRTQDAIDVKLRA.

The region spanning 2–131 is the HTH rrf2-type domain; that stretch reads RLTSKGRYAV…NNITLGELVN (130 aa). Positions 28-51 form a DNA-binding region, H-T-H motif; sequence LADISERQGISLSYLEQLFSRLRK. Residues cysteine 92, cysteine 98, and cysteine 104 each contribute to the [2Fe-2S] cluster site. Residues 140–162 are disordered; sequence GRQHTHDAPRTRTQDAIDVKLRA. The span at 143–162 shows a compositional bias: basic and acidic residues; sequence HTHDAPRTRTQDAIDVKLRA.

Requires [2Fe-2S] cluster as cofactor.

In terms of biological role, regulates the transcription of several operons and genes involved in the biogenesis of Fe-S clusters and Fe-S-containing proteins. The protein is HTH-type transcriptional regulator IscR of Shigella flexneri.